We begin with the raw amino-acid sequence, 317 residues long: Gamma-glutamyl hydrolase (317 aa).

The first 24 residues, 1-24 (MASLGRLLCAWVLLLCGLASPGLS), serve as a signal peptide directing secretion. The Gamma-glutamyl hydrolase domain occupies 25 to 317 (GSYERGSKRP…SSFQQAYMFN (293 aa)). N-linked (GlcNAc...) asparagine glycans are attached at residues Asn46 and Asn100. The Nucleophile role is filled by Cys133. Asn153, Asn162, Asn188, and Asn202 each carry an N-linked (GlcNAc...) asparagine glycan. His243 (proton donor) is an active-site residue. Asn306 carries an N-linked (GlcNAc...) asparagine glycan.

The protein belongs to the peptidase C26 family. Homodimer.

Its subcellular location is the secreted. It is found in the extracellular space. It localises to the lysosome. The protein resides in the melanosome. It catalyses the reaction (6S)-5,6,7,8-tetrahydrofolyl-(gamma-L-Glu)(n) + (n-1) H2O = (6S)-5,6,7,8-tetrahydrofolate + (n-1) L-glutamate. Its activity is regulated as follows. Activity is altered by insulin and estrogen. Its function is as follows. Hydrolyzes the polyglutamate sidechains of pteroylpolyglutamates. Progressively removes gamma-glutamyl residues from pteroylpoly-gamma-glutamate to yield pteroyl-alpha-glutamate (folic acid) and free glutamate. May play an important role in the bioavailability of dietary pteroylpolyglutamates and in the metabolism of pteroylpolyglutamates and antifolates. Exhibits either endo- or exopeptidase activity depending upon the tissue of origin. When secreted, it acts primarily as an endopeptidase. The chain is Gamma-glutamyl hydrolase (Ggh) from Rattus norvegicus (Rat).